Reading from the N-terminus, the 420-residue chain is CinA-like protein (420 aa).

It belongs to the CinA family.

In Chloroherpeton thalassium (strain ATCC 35110 / GB-78), this protein is CinA-like protein.